The chain runs to 515 residues: Bifunctional purine biosynthesis protein PurH (515 aa).

The MGS-like domain occupies 1-145; the sequence is MTKRALISVS…KNHASVTVVV (145 aa).

It belongs to the PurH family.

It carries out the reaction (6R)-10-formyltetrahydrofolate + 5-amino-1-(5-phospho-beta-D-ribosyl)imidazole-4-carboxamide = 5-formamido-1-(5-phospho-D-ribosyl)imidazole-4-carboxamide + (6S)-5,6,7,8-tetrahydrofolate. The enzyme catalyses IMP + H2O = 5-formamido-1-(5-phospho-D-ribosyl)imidazole-4-carboxamide. The protein operates within purine metabolism; IMP biosynthesis via de novo pathway; 5-formamido-1-(5-phospho-D-ribosyl)imidazole-4-carboxamide from 5-amino-1-(5-phospho-D-ribosyl)imidazole-4-carboxamide (10-formyl THF route): step 1/1. It functions in the pathway purine metabolism; IMP biosynthesis via de novo pathway; IMP from 5-formamido-1-(5-phospho-D-ribosyl)imidazole-4-carboxamide: step 1/1. The sequence is that of Bifunctional purine biosynthesis protein PurH from Streptococcus uberis (strain ATCC BAA-854 / 0140J).